The following is a 986-amino-acid chain: Probable ATP-dependent RNA helicase ddx42 (986 aa).

Disordered stretches follow at residues 1–149 (MSKR…DEDD), 165–192 (AAIDNSKSIEKGQQQQQSLKSKRDDIDN), and 206–252 (QLAN…IEPL). Residues 29 to 82 (SNINNNNNSNNNNNNNNNNNNNNNNNNNKNNIGTGINLNIKNNNNINNNNNKSG) are compositionally biased toward low complexity. Polar residues predominate over residues 105–117 (PPKSSMTTLNKSP). Low complexity predominate over residues 119-137 (NFENASSNNNNNNNNNNQE). Residues 217 to 236 (DDDVDYSSLDDDDGYFDDEE) show a composition bias toward acidic residues. The Q motif motif lies at 305–333 (TSFGHYGFDDILLQAIAKQSIETPTPIQK). One can recognise a Helicase ATP-binding domain in the interval 336 to 511 (IPIALSGRDL…RTILSDPIKI (176 aa)). 349-356 (AKTGSGKT) contacts ATP. The short motif at 459–462 (DEAD) is the DEAD box element. Residues 522 to 684 (DITQIVQVLK…FVPPELIDVA (163 aa)) enclose the Helicase C-terminal domain. Residues 688–986 (PHFKRERGGG…FNQRSQYNRR (299 aa)) are disordered. The span at 696–723 (GGGGGSNRGRGRGGGGVGYRRNSRGGGV) shows a compositional bias: gly residues. Composition is skewed to low complexity over residues 753-764 (NPNNTDNSEINN) and 771-978 (NNEN…NNFN).

The protein belongs to the DEAD box helicase family. DDX42 subfamily.

It is found in the nucleus. The catalysed reaction is ATP + H2O = ADP + phosphate + H(+). Functionally, probable ATP-dependent RNA helicase which may bind to partially double-stranded RNAs (dsRNAs) in order to unwind RNA secondary structures. The polypeptide is Probable ATP-dependent RNA helicase ddx42 (ddx42) (Dictyostelium discoideum (Social amoeba)).